We begin with the raw amino-acid sequence, 47 residues long: Large ribosomal subunit protein bL34 (47 aa).

It belongs to the bacterial ribosomal protein bL34 family.

The sequence is that of Large ribosomal subunit protein bL34 from Corynebacterium glutamicum (strain R).